We begin with the raw amino-acid sequence, 361 residues long: Large-conductance mechanosensitive channel MscMJLR (361 aa).

5 helical membrane-spanning segments follow: residues I20 to I40, L65 to L85, L89 to F109, I137 to I157, and L177 to L197.

Belongs to the MscS (TC 1.A.23) family.

The protein localises to the cell membrane. Its function is as follows. Large-conductance mechanosensitive channel that opens in response to stretch forces in the membrane lipid bilayer. Selective for cations. Rectifies with voltage. The sequence is that of Large-conductance mechanosensitive channel MscMJLR from Methanocaldococcus jannaschii (strain ATCC 43067 / DSM 2661 / JAL-1 / JCM 10045 / NBRC 100440) (Methanococcus jannaschii).